Consider the following 505-residue polypeptide: Outer capsid protein VP5 (505 aa).

The involved in membrane permeabilization stretch occupies residues 1–42 (MGKFTSFLKRAGSATKKALTSDAAKRMYKMAGKTLQKVVESE).

This sequence belongs to the orbivirus VP5 family.

It localises to the virion. Its function is as follows. VP5 protein is one of the two proteins (with VP2) which constitute the virus particle outer capsid. Acts as a membrane permeabilization protein that mediates release of viral particles from endosomal compartments into the cytoplasm. Permeabilization activity is probably negatively regulated by VP2 and is triggered by endosomal degradation of VP2 and exposure to low pH. This is Outer capsid protein VP5 (Segment-6) from African horse sickness virus 9 (AHSV-9).